We begin with the raw amino-acid sequence, 320 residues long: Replication factor C small subunit 2 (320 aa).

Residue 44-51 (GPPGTGKT) participates in ATP binding.

The protein belongs to the activator 1 small subunits family. RfcS subfamily. Heteromultimer composed of small subunits (RfcS) and large subunits (RfcL).

Part of the RFC clamp loader complex which loads the PCNA sliding clamp onto DNA. The polypeptide is Replication factor C small subunit 2 (Pyrobaculum islandicum (strain DSM 4184 / JCM 9189 / GEO3)).